The primary structure comprises 435 residues: D-inositol 3-phosphate glycosyltransferase (435 aa).

His-16 lines the 1D-myo-inositol 3-phosphate pocket. Residues 22 to 23 and Gly-30 contribute to the UDP-N-acetyl-alpha-D-glucosamine site; that span reads QP. Residues 27-32, Lys-85, Tyr-118, Thr-142, and Arg-162 contribute to the 1D-myo-inositol 3-phosphate site; that span reads DAGGMN. UDP-N-acetyl-alpha-D-glucosamine-binding residues include Arg-237, Lys-242, and Val-303. Mg(2+) contacts are provided by Tyr-312, Arg-313, and Ala-315. UDP-N-acetyl-alpha-D-glucosamine-binding residues include Glu-325 and Glu-333. A Mg(2+)-binding site is contributed by Thr-339.

This sequence belongs to the glycosyltransferase group 1 family. MshA subfamily. As to quaternary structure, homodimer.

The catalysed reaction is 1D-myo-inositol 3-phosphate + UDP-N-acetyl-alpha-D-glucosamine = 1D-myo-inositol 2-acetamido-2-deoxy-alpha-D-glucopyranoside 3-phosphate + UDP + H(+). Catalyzes the transfer of a N-acetyl-glucosamine moiety to 1D-myo-inositol 3-phosphate to produce 1D-myo-inositol 2-acetamido-2-deoxy-glucopyranoside 3-phosphate in the mycothiol biosynthesis pathway. The polypeptide is D-inositol 3-phosphate glycosyltransferase (Kineococcus radiotolerans (strain ATCC BAA-149 / DSM 14245 / SRS30216)).